Reading from the N-terminus, the 273-residue chain is Ribosomal RNA small subunit methyltransferase A (273 aa).

S-adenosyl-L-methionine contacts are provided by N18, L20, G45, E66, D91, and N113.

Belongs to the class I-like SAM-binding methyltransferase superfamily. rRNA adenine N(6)-methyltransferase family. RsmA subfamily.

Its subcellular location is the cytoplasm. The catalysed reaction is adenosine(1518)/adenosine(1519) in 16S rRNA + 4 S-adenosyl-L-methionine = N(6)-dimethyladenosine(1518)/N(6)-dimethyladenosine(1519) in 16S rRNA + 4 S-adenosyl-L-homocysteine + 4 H(+). Its function is as follows. Specifically dimethylates two adjacent adenosines (A1518 and A1519) in the loop of a conserved hairpin near the 3'-end of 16S rRNA in the 30S particle. May play a critical role in biogenesis of 30S subunits. This chain is Ribosomal RNA small subunit methyltransferase A, found in Klebsiella pneumoniae (strain 342).